Reading from the N-terminus, the 1769-residue chain is U3 small nucleolar RNA-associated protein 10 (1769 aa).

The residue at position 2 (Ser-2) is an N-acetylserine. One copy of the HEAT repeat lies at 1729 to 1767 (LVPVIAELLEDDDEEIEREVRTGLVKVVENVLGEPFDRY).

The protein belongs to the HEATR1/UTP10 family. In terms of assembly, interacts with snoRNA U3. Interacts with MPP10. Component of the ribosomal small subunit (SSU) processome composed of at least 40 protein subunits and snoRNA U3. In the absence of snoRNA3, forms a complex with other t-UTPs. This complex can associate with pre-18S ribosomal RNAs.

The protein resides in the nucleus. The protein localises to the nucleolus. It is found in the mitochondrion. Involved in nucleolar processing of pre-18S ribosomal RNA. Required for optimal pre-ribosomal RNA transcription by RNA polymerase I together with a subset of U3 proteins required for transcription (t-UTPs). Involved in ribosome biosynthesis. The polypeptide is U3 small nucleolar RNA-associated protein 10 (UTP10) (Saccharomyces cerevisiae (strain ATCC 204508 / S288c) (Baker's yeast)).